The sequence spans 312 residues: Methionyl-tRNA formyltransferase (312 aa).

Position 109–112 (109–112 (SLLP)) interacts with (6S)-5,6,7,8-tetrahydrofolate.

Belongs to the Fmt family.

It carries out the reaction L-methionyl-tRNA(fMet) + (6R)-10-formyltetrahydrofolate = N-formyl-L-methionyl-tRNA(fMet) + (6S)-5,6,7,8-tetrahydrofolate + H(+). In terms of biological role, attaches a formyl group to the free amino group of methionyl-tRNA(fMet). The formyl group appears to play a dual role in the initiator identity of N-formylmethionyl-tRNA by promoting its recognition by IF2 and preventing the misappropriation of this tRNA by the elongation apparatus. The protein is Methionyl-tRNA formyltransferase of Anaeromyxobacter dehalogenans (strain 2CP-1 / ATCC BAA-258).